Here is a 340-residue protein sequence, read N- to C-terminus: Flap endonuclease 1 (340 aa).

The segment at Met-1–Arg-98 is N-domain. 7 residues coordinate Mg(2+): Asp-27, Asp-80, Glu-151, Glu-153, Asp-172, Asp-174, and Asp-235. The segment at Glu-115–Gly-256 is I-domain. The interaction with PCNA stretch occupies residues Lys-332–Phe-340.

Belongs to the XPG/RAD2 endonuclease family. FEN1 subfamily. As to quaternary structure, interacts with PCNA. PCNA stimulates the nuclease activity without altering cleavage specificity. The cofactor is Mg(2+).

Its function is as follows. Structure-specific nuclease with 5'-flap endonuclease and 5'-3' exonuclease activities involved in DNA replication and repair. During DNA replication, cleaves the 5'-overhanging flap structure that is generated by displacement synthesis when DNA polymerase encounters the 5'-end of a downstream Okazaki fragment. Binds the unpaired 3'-DNA end and kinks the DNA to facilitate 5' cleavage specificity. Cleaves one nucleotide into the double-stranded DNA from the junction in flap DNA, leaving a nick for ligation. Also involved in the base excision repair (BER) pathway. Acts as a genome stabilization factor that prevents flaps from equilibrating into structures that lead to duplications and deletions. Also possesses 5'-3' exonuclease activity on nicked or gapped double-stranded DNA. This Methanocella arvoryzae (strain DSM 22066 / NBRC 105507 / MRE50) protein is Flap endonuclease 1.